We begin with the raw amino-acid sequence, 1003 residues long: MPSKFSCRQLREAGQCFESFLVVRGLDMETDRERLRTIYNRDFKISFGTPAPGFSSMLYGMKIANLAYVTKTRVRFFRLDRWADVRFPEKRRMKLGSDISKHHKSLLAKIFYDRAEYLHGKHGVDVEVQGPHEARDGQLLIRLDLNRKEVLTLRLRNGGTQSVTLTHLFPLCRTPQFAFYNEDQELPCPLGPGECYELHVHCKTSFVGYFPATVLWELLGPGESGSEGAGTFYIARFLAAVAHSPLAAQLKPMTPFKRTRITGNPVVTNRIEEGERPDRAKGYDLELSMALGTYYPPPRLRQLLPMLLQGTSIFTAPKEIAEIKAQLETALKWRNYEVKLRLLLHLEELQMEHDIRHYDLESVPMTWDPVDQNPRLLTLEVPGVTESRPSVLRGDHLFALLSSETHQEDPITYKGFVHKVELDRVKLSFSMSLLSRFVDGLTFKVNFTFNRQPLRVQHRALELTGRWLLWPMLFPVAPRDVPLLPSDVKLKLYDRSLESNPEQLQAMRHIVTGTTRPAPYIIFGPPGTGKTVTLVEAIKQVVKHLPKAHILACAPSNSGADLLCQRLRVHLPSSIYRLLAPSRDIRMVPEDIKPCCNWDAKKGEYVFPAKKKLQEYRVLITTLITAGRLVSAQFPIDHFTHIFIDEAGHCMEPESLVAIAGLMEVKETGDPGGQLVLAGDPRQLGPVLRSPLTQKHGLGYSLLERLLTYNSLYKKGPDGYDPQFITKLLRNYRSHPTILDIPNQLYYEGELQACADVVDRERFCRWAGLPRQGFPIIFHGVMGKDEREGNSPSFFNPEEAATVTSYLKLLLAPSSKKGKARLSPRSVGVISPYRKQVEKIRYCITKLDRELRGLDDIKDLKVGSVEEFQGQERSVILISTVRSSQSFVQLDLDFNLGFLKNPKRFNVAVTRAKALLIIVGNPLLLGHDPDWKVFLEFCKENGGYTGCPFPAKLDLQQGQNLLQGLSKLSPSTSGPHSHDYLPQEREGEGGLSLQVEPEWRNEL.

Position 148 is an N6-acetyllysine (Lys-148). A phosphothreonine mark is found at Thr-160 and Thr-254. Phosphoserine is present on Ser-432. 524–531 contributes to the ATP binding site; the sequence is GPPGTGKT. Positions 645–648 match the DEAG box motif; sequence DEAG. The segment at 921–965 is interaction with AGO2 and APOBEC3G; that stretch reads NPLLLGHDPDWKVFLEFCKENGGYTGCPFPAKLDLQQGQNLLQGL. The disordered stretch occupies residues 966–1003; it reads SKLSPSTSGPHSHDYLPQEREGEGGLSLQVEPEWRNEL. Phosphoserine occurs at positions 969 and 977. Residues 976-988 show a composition bias toward basic and acidic residues; the sequence is HSHDYLPQEREGE.

The protein belongs to the DNA2/NAM7 helicase family. SDE3 subfamily. In terms of assembly, interacts with DICER1, AGO2, TARBP2, EIF6 and RPL7A (60S ribosome subunit); they form a large RNA-induced silencing complex (RISC). Interacts with APOBEC3G in an RNA-dependent manner. Interacts with TRIM71 (via NHL repeats) in an RNA-dependent manner. Interacts with both protein products of LIRE1, ORF1p and ORF2p. Interacts with TUT4 and, to a lesser extent, TUT7; the interactions are RNA-dependent. Interacts with AGO2, TNRC6B and UPF1; the interactions are direct and RNA-dependent. Interacts with FMR1; this interaction is direct, occurs in an RNA-dependent manner on polysomes and induces association of MOV10 with RNAs. Interacts with SHFL; the interaction increases in presence of RNA. Interacts with DHX34; the interaction is RNA-independent. Interacts with IKBKE. Interacts with RBM46. (Microbial infection) Interacts with the human hepatitis delta virus (HDV) antigen HDAg. As to quaternary structure, (Microbial infection) Interacts with HIV-1 protein GAG. Post-translationally, ubiquitinated by the DCX(DCAF12) complex that specifically recognizes the glutamate-leucine (Glu-Leu) degron at the C-terminus, leading to its degradation. (Microbial infection) Cleaved and targeted for degradation by picornavirus proteases.

It is found in the cytoplasm. The protein localises to the P-body. It localises to the cytoplasmic ribonucleoprotein granule. The protein resides in the stress granule. Its subcellular location is the nucleus. It catalyses the reaction ATP + H2O = ADP + phosphate + H(+). Functionally, 5' to 3' RNA helicase that is involved in a number of cellular roles ranging from mRNA metabolism and translation, modulation of viral infectivity, inhibition of retrotransposition, or regulation of synaptic transmission. Plays an important role in innate antiviral immunity by promoting type I interferon production. Mechanistically, specifically uses IKKepsilon/IKBKE as the mediator kinase for IRF3 activation. Blocks HIV-1 virus replication at a post-entry step. Counteracts HIV-1 Vif-mediated degradation of APOBEC3G through its helicase activity by interfering with the ubiquitin-proteasome pathway. Also inhibits hepatitis B virus/HBV replication by interacting with HBV RNA and thereby inhibiting the early step of viral reverse transcription. Contributes to UPF1 mRNA target degradation by translocation along 3' UTRs. Required for microRNA (miRNA)-mediated gene silencing by the RNA-induced silencing complex (RISC). Required for both miRNA-mediated translational repression and miRNA-mediated cleavage of complementary mRNAs by RISC. In cooperation with FMR1, regulates miRNA-mediated translational repression by AGO2. Restricts retrotransposition of long interspersed element-1 (LINE-1) in cooperation with TUT4 and TUT7 counteracting the RNA chaperonne activity of L1RE1. Facilitates LINE-1 uridylation by TUT4 and TUT7. Required for embryonic viability and for normal central nervous system development and function. Plays two critical roles in early brain development: suppresses retroelements in the nucleus by directly inhibiting cDNA synthesis, while regulates cytoskeletal mRNAs to influence neurite outgrowth in the cytosol. May function as a messenger ribonucleoprotein (mRNP) clearance factor. Its function is as follows. (Microbial infection) Required for RNA-directed transcription and replication of the human hepatitis delta virus (HDV). Interacts with small capped HDV RNAs derived from genomic hairpin structures that mark the initiation sites of RNA-dependent HDV RNA transcription. The protein is Helicase MOV-10 of Homo sapiens (Human).